The primary structure comprises 103 residues: UPF0091 protein PH0944 (103 aa).

This sequence belongs to the UPF0091 family.

This chain is UPF0091 protein PH0944, found in Pyrococcus horikoshii (strain ATCC 700860 / DSM 12428 / JCM 9974 / NBRC 100139 / OT-3).